Reading from the N-terminus, the 222-residue chain is Cytidylate kinase (222 aa).

Position 10 to 18 (10 to 18) interacts with ATP; the sequence is GPSASGKGT.

This sequence belongs to the cytidylate kinase family. Type 1 subfamily.

It is found in the cytoplasm. The catalysed reaction is CMP + ATP = CDP + ADP. It catalyses the reaction dCMP + ATP = dCDP + ADP. This is Cytidylate kinase from Chromobacterium violaceum (strain ATCC 12472 / DSM 30191 / JCM 1249 / CCUG 213 / NBRC 12614 / NCIMB 9131 / NCTC 9757 / MK).